Consider the following 65-residue polypeptide: MPKLKTRKAAAKRFKATGTGKFTRRRAFRNHLLDHKTPKQKRHLATKAVVHETDELRVVRMLPYA.

This sequence belongs to the bacterial ribosomal protein bL35 family.

In Parasynechococcus marenigrum (strain WH8102), this protein is Large ribosomal subunit protein bL35.